A 224-amino-acid chain; its full sequence is MSNPVFLALDIPRLEAGKALVDKVKAHIGGVKLGMEFFYAHGHHGVHEIAHCGLPVFLDLKLHDIPNTVAAAMQSIHVLEPAIVTVHASGGRAMMEDAKAAAGENTKVVGVTMLTSLDERDLERTGVDGSPHDHVMRLAELAENAGLDGIVCSGQEVGAVHKQWKQGFFVVPGLRPAGSASGDQKRVVTPRQARDDGASVLVIGRPISKADDPEQAARDIEATL.

Substrate is bound by residues Asp-10, Lys-32, 59 to 68 (DLKLHDIPNT), Thr-115, Arg-175, Gln-184, Gly-204, and Arg-205. Lys-61 serves as the catalytic Proton donor.

The protein belongs to the OMP decarboxylase family. Type 1 subfamily. Homodimer.

It catalyses the reaction orotidine 5'-phosphate + H(+) = UMP + CO2. The protein operates within pyrimidine metabolism; UMP biosynthesis via de novo pathway; UMP from orotate: step 2/2. Functionally, catalyzes the decarboxylation of orotidine 5'-monophosphate (OMP) to uridine 5'-monophosphate (UMP). This is Orotidine 5'-phosphate decarboxylase from Erythrobacter litoralis (strain HTCC2594).